The primary structure comprises 190 residues: Iron-sulfur protein (190 aa).

The 29-residue stretch at Val8 to Asp36 folds into the 4Fe-4S ferredoxin-type 1 domain. The [4Fe-4S] cluster site is built by Cys17, Cys20, Cys23, Cys27, Cys65, Cys68, Cys73, Cys77, Cys96, Cys99, Cys102, Cys106, Cys133, Cys136, Cys150, and Cys154. 4Fe-4S ferredoxin-type domains are found at residues Gly87–Glu116 and Cys133–Leu164.

The carbon monoxide dehydrogenase (CODH) oxidizes carbon monoxide coupled, via CooF, to the reduction of a hydrogen cation by a hydrogenase (probably CooH). CooF is required in stoichiometric amounts in vitro for anchoring CODH to the membrane as well as for conveying the electrons to the hydrogenase. The polypeptide is Iron-sulfur protein (cooF) (Rhodospirillum rubrum).